Here is a 209-residue protein sequence, read N- to C-terminus: Large ribosomal subunit protein uL3 (209 aa).

The segment at 128 to 163 (AHRGPMTHGSKFHRAVGSMGASSDPSRTFKNKRMPG) is disordered.

Belongs to the universal ribosomal protein uL3 family. In terms of assembly, part of the 50S ribosomal subunit. Forms a cluster with proteins L14 and L19.

Functionally, one of the primary rRNA binding proteins, it binds directly near the 3'-end of the 23S rRNA, where it nucleates assembly of the 50S subunit. This chain is Large ribosomal subunit protein uL3, found in Clostridium botulinum (strain 657 / Type Ba4).